A 223-amino-acid polypeptide reads, in one-letter code: Type 3 secretion system stator protein (223 aa).

This sequence belongs to the SctL stator family. The core secretion machinery of the T3SS is composed of approximately 20 different proteins, including cytoplasmic components, a base, an export apparatus and a needle. This subunit is part of the cytosolic complex. Interacts directly with YscN/SctN (T3SS ATPase) and YscQ/SctQ (the major sorting platform component). Forms homodimers.

It localises to the cytoplasm. Functionally, component of the type III secretion system (T3SS), also called injectisome, which is used to inject bacterial effector proteins into eukaryotic host cells. Acts as a regulator of the YscN/SctN ATPase activity. Overexpression of YscL/SctL abolishes type III secretion and down-regulates the expression of secretion apparatus components. This is Type 3 secretion system stator protein from Yersinia enterocolitica.